The chain runs to 283 residues: Protein/nucleic acid deglycase HchA (283 aa).

Zn(2+) is bound by residues His-86, Glu-91, and His-123. The Nucleophile role is filled by Cys-185.

The protein belongs to the peptidase C56 family. HchA subfamily. Homodimer.

The protein resides in the cytoplasm. It carries out the reaction N(omega)-(1-hydroxy-2-oxopropyl)-L-arginyl-[protein] + H2O = lactate + L-arginyl-[protein] + H(+). The catalysed reaction is N(6)-(1-hydroxy-2-oxopropyl)-L-lysyl-[protein] + H2O = lactate + L-lysyl-[protein] + H(+). The enzyme catalyses S-(1-hydroxy-2-oxopropyl)-L-cysteinyl-[protein] + H2O = lactate + L-cysteinyl-[protein] + H(+). It catalyses the reaction N(omega)-(1-hydroxy-2-oxoethyl)-L-arginyl-[protein] + H2O = L-arginyl-[protein] + glycolate + H(+). It carries out the reaction N(6)-(1-hydroxy-2-oxoethyl)-L-lysyl-[protein] + H2O = glycolate + L-lysyl-[protein] + H(+). The catalysed reaction is S-(1-hydroxy-2-oxoethyl)-L-cysteinyl-[protein] + H2O = glycolate + L-cysteinyl-[protein] + H(+). The enzyme catalyses N(2)-(1-hydroxy-2-oxopropyl)-dGTP + H2O = lactate + dGTP + H(+). It catalyses the reaction N(2)-(1-hydroxy-2-oxopropyl)-GTP + H2O = lactate + GTP + H(+). It carries out the reaction N(2)-(1-hydroxy-2-oxopropyl)-GDP + H2O = lactate + GDP + H(+). The catalysed reaction is N(2)-(1-hydroxy-2-oxopropyl)-GMP + H2O = lactate + GMP + H(+). The enzyme catalyses N(2)-(1-hydroxy-2-oxoethyl)-dGTP + H2O = dGTP + glycolate + H(+). It catalyses the reaction N(2)-(1-hydroxy-2-oxoethyl)-GTP + H2O = glycolate + GTP + H(+). It carries out the reaction N(2)-(1-hydroxy-2-oxoethyl)-GDP + H2O = glycolate + GDP + H(+). The catalysed reaction is N(2)-(1-hydroxy-2-oxoethyl)-GMP + H2O = glycolate + GMP + H(+). The enzyme catalyses an N(2)-(1-hydroxy-2-oxopropyl)-guanosine in RNA + H2O = a guanosine in RNA + lactate + H(+). It catalyses the reaction an N(2)-(1-hydroxy-2-oxopropyl)-2'-deoxyguanosine in DNA + H2O = a 2'-deoxyguanosine in DNA + lactate + H(+). It carries out the reaction an N(2)-(1-hydroxy-2-oxoethyl)-guanosine in RNA + H2O = a guanosine in RNA + glycolate + H(+). The catalysed reaction is an N(2)-(1-hydroxy-2-oxoethyl)-2'-deoxyguanosine in DNA + H2O = a 2'-deoxyguanosine in DNA + glycolate + H(+). Protein and nucleotide deglycase that catalyzes the deglycation of the Maillard adducts formed between amino groups of proteins or nucleotides and reactive carbonyl groups of glyoxals. Thus, functions as a protein deglycase that repairs methylglyoxal- and glyoxal-glycated proteins, and releases repaired proteins and lactate or glycolate, respectively. Deglycates cysteine, arginine and lysine residues in proteins, and thus reactivates these proteins by reversing glycation by glyoxals. Acts on early glycation intermediates (hemithioacetals and aminocarbinols), preventing the formation of Schiff bases and advanced glycation endproducts (AGE). Also functions as a nucleotide deglycase able to repair glycated guanine in the free nucleotide pool (GTP, GDP, GMP, dGTP) and in DNA and RNA. Is thus involved in a major nucleotide repair system named guanine glycation repair (GG repair), dedicated to reversing methylglyoxal and glyoxal damage via nucleotide sanitization and direct nucleic acid repair. Plays an important role in protecting cells from carbonyl stress. This Shigella sonnei (strain Ss046) protein is Protein/nucleic acid deglycase HchA.